The primary structure comprises 365 residues: Alanine racemase (365 aa).

Residue Lys-35 is the Proton acceptor; specific for D-alanine of the active site. Lys-35 carries the post-translational modification N6-(pyridoxal phosphate)lysine. Arg-130 contributes to the substrate binding site. Residue Tyr-256 is the Proton acceptor; specific for L-alanine of the active site. Residue Met-304 participates in substrate binding.

Belongs to the alanine racemase family. Pyridoxal 5'-phosphate serves as cofactor.

The enzyme catalyses L-alanine = D-alanine. The protein operates within amino-acid biosynthesis; D-alanine biosynthesis; D-alanine from L-alanine: step 1/1. Its function is as follows. Catalyzes the interconversion of L-alanine and D-alanine. May also act on other amino acids. The polypeptide is Alanine racemase (alr) (Polaromonas naphthalenivorans (strain CJ2)).